The sequence spans 138 residues: Protein FAM136A (138 aa).

Belongs to the FAM136 family.

The chain is Protein FAM136A (fam136a) from Xenopus laevis (African clawed frog).